We begin with the raw amino-acid sequence, 301 residues long: Methionyl-tRNA formyltransferase (301 aa).

(6S)-5,6,7,8-tetrahydrofolate is bound at residue 109-112; sequence SLLP.

Belongs to the Fmt family.

The enzyme catalyses L-methionyl-tRNA(fMet) + (6R)-10-formyltetrahydrofolate = N-formyl-L-methionyl-tRNA(fMet) + (6S)-5,6,7,8-tetrahydrofolate + H(+). Attaches a formyl group to the free amino group of methionyl-tRNA(fMet). The formyl group appears to play a dual role in the initiator identity of N-formylmethionyl-tRNA by promoting its recognition by IF2 and preventing the misappropriation of this tRNA by the elongation apparatus. The sequence is that of Methionyl-tRNA formyltransferase from Novosphingobium aromaticivorans (strain ATCC 700278 / DSM 12444 / CCUG 56034 / CIP 105152 / NBRC 16084 / F199).